A 114-amino-acid polypeptide reads, in one-letter code: Replication initiation control protein YabA (114 aa).

Zn(2+)-binding residues include histidine 84, cysteine 86, cysteine 102, and cysteine 105.

It belongs to the YabA family. In terms of assembly, homotetramer. Interacts with both DnaA and DnaN, acting as a bridge between these two proteins. It depends on Zn(2+) as a cofactor.

Its subcellular location is the cytoplasm. It localises to the nucleoid. In terms of biological role, involved in control of chromosome replication initiation. Inhibits the cooperative binding of DnaA to the oriC region, thus negatively regulating initiation of chromosome replication. Inhibits the ability of DnaA-ATP to form a helix on DNA; does not disassemble preformed DnaA-DNA helices. Decreases the residence time of DnaA on the chromosome at its binding sites (oriC, replication forks and promoter-binding sites). Tethers DnaA to the replication machinery via the DNA polymerase beta sliding clamp subunit (dnaN). Associates with oriC and other DnaA targets on the chromosome in a DnaA-dependent manner. The sequence is that of Replication initiation control protein YabA from Ligilactobacillus salivarius (strain UCC118) (Lactobacillus salivarius).